The primary structure comprises 954 residues: SWI/SNF-related matrix-associated actin-dependent regulator of chromatin subfamily A-like protein 1 (954 aa).

Disordered stretches follow at residues 1–20 (MSLP…RQKA) and 27–238 (KLLA…NSQK). Ser-2 carries the post-translational modification N-acetylserine. Residues 3 to 34 (LPLTEEQRKKIEENRQKALARRAEKLLAEQHQ) are a coiled coil. The interval 5 to 30 (LTEEQRKKIEENRQKALARRAEKLLA) is mediates interaction with RPA2. A compositionally biased stretch (basic and acidic residues) spans 7–20 (EEQRKKIEENRQKA). Over residues 72–83 (KQQNLSSSSNAD) the composition is skewed to polar residues. Residues Ser-112, Ser-123, Ser-129, and Ser-151 each carry the phosphoserine modification. 2 stretches are compositionally biased toward polar residues: residues 171 to 183 (KSSQ…SSGQ) and 197 to 238 (ASPS…NSQK). Ser-198 is subject to Phosphoserine. 2 consecutive HARP domains span residues 226 to 303 (SGSS…QPLE) and 327 to 398 (SLSF…DPLP). Positions 445–600 (NFAIAKGGRL…YTQIIAVKPT (156 aa)) constitute a Helicase ATP-binding domain. 458-465 (DDMGLGKT) provides a ligand contact to ATP. The DESH box motif lies at 549 to 552 (DESH). Positions 644–661 (RRLKSDVLSQLPAKQRKI) match the Nuclear localization signal motif. Residues 716 to 869 (YILDLLESGR…ETNFSEMTES (154 aa)) enclose the Helicase C-terminal domain. The interval 904–934 (ESFDPGSASGTSGSSSQNMGDTLDESSLTAS) is disordered. The span at 909 to 919 (GSASGTSGSSS) shows a compositional bias: low complexity. The segment covering 920–934 (QNMGDTLDESSLTAS) has biased composition (polar residues).

Belongs to the SNF2/RAD54 helicase family. SMARCAL1 subfamily. Interacts with RPA2; the interaction is direct and mediates the recruitment by the RPA complex of SMARCAL1 to sites of DNA damage. Post-translationally, DNA damage-regulated phosphorylation by kinases that may include ATM, ATR and PRKDC. As to expression, ubiquitously expressed, with high levels in testis.

Its subcellular location is the nucleus. It catalyses the reaction ATP + H2O = ADP + phosphate + H(+). ATP-dependent annealing helicase that binds selectively to fork DNA relative to ssDNA or dsDNA and catalyzes the rewinding of the stably unwound DNA. Rewinds single-stranded DNA bubbles that are stably bound by replication protein A (RPA). Acts throughout the genome to reanneal stably unwound DNA, performing the opposite reaction of many enzymes, such as helicases and polymerases, that unwind DNA. May play an important role in DNA damage response by acting at stalled replication forks. The chain is SWI/SNF-related matrix-associated actin-dependent regulator of chromatin subfamily A-like protein 1 from Homo sapiens (Human).